The sequence spans 855 residues: MTDLSQHTPMMQQYFKLKHQHPDQLMFYRMGDFYELFYEDAKKAAKLLDITLTARGQSGGKAIPMAGIPFHSAEGYLAKLVKLGESVAICEQIGDPATSKGPVERQVVRIITPGTVSDEALLDERRDNLLAAILGDERLFGLAVLDITSGRFSVQEIKGWETLLAELERLNPAELLIPDDWPQGLPAEKRRGVRRRAPWDFDRDSAHKSLCQQFGTQDLKGFGCQNLTLAIGAAGCLLAYAKETQRTALPHLRSLRHDRLDDTVILDGASRRNLELDINLSGGRENTLQSVVDRCQTAMASRLMSRWLNRPLRDRAVLEARQESIACLLERYRFENLQPQLKEIGDLERILARIGLRNARPRDLARLRDALAALPDLQNAMTELEAPHLQALATTIGTYPELAELLAKAIIDNPPAVIRDGGVIKTGYDAELDELQALSENAGQFLMDLEAREKARTGLPNLKVGYNRIHGYFIELPRVQAEQAPADYIRRQTLKGAERFITPELKAFEDKALSAQSRALAREKALYEELLERLIGHLAPLQDSASALAELDVLANLAERALNLDLNRPRFVEHTCLHIEQGRHPVVEQVLETPFVANDLALDADTRMLVITGPNMGGKSTYMRQTALIVLLAHIGSFVPAARCELSLVDRIFTRIGSSDDLAGGRSTFMVEMSETANILHNATDKSLVLMDEVGRGTSTFDGLSLAWAAAEDLARTRAFTLFATHYFELTVLPESQPAVANVHLNATEHNERIVFLHHVLPGPASQSYGLAVAQLAGVPAPVIQRAREHLKRLETTSLPHEMPSQQSGKPASPMQSDLFASLPHPVIDELSRINPDDISPRQALDLLYAWKMRV.

613–620 (GPNMGGKS) contacts ATP. The segment at 796–816 (TTSLPHEMPSQQSGKPASPMQ) is disordered.

Belongs to the DNA mismatch repair MutS family.

This protein is involved in the repair of mismatches in DNA. It is possible that it carries out the mismatch recognition step. This protein has a weak ATPase activity. This Pseudomonas aeruginosa (strain ATCC 15692 / DSM 22644 / CIP 104116 / JCM 14847 / LMG 12228 / 1C / PRS 101 / PAO1) protein is DNA mismatch repair protein MutS.